The primary structure comprises 430 residues: Alpha-(1-&gt;3)-arabinofuranosyltransferase (430 aa).

10 consecutive transmembrane segments (helical) span residues 26 to 46 (APSTATVLRSVLWPIAILSVI), 114 to 134 (WYISFNVLAFLIAAYLMLRIF), 136 to 156 (YTLSSVAAPALVLAMFCTESV), 160 to 180 (LVFTNINGCMLLGAVLFFRWL), 194 to 214 (AIGLTLVVKPSLAPLLLLPVL), 218 to 238 (FYTLITAFGVPLVFNIAAWPL), 276 to 296 (WLILLLRVVFLLLAVGSLWLL), 307 to 327 (FWLLTSSGVLLTASFLLLSLG), 352 to 372 (WPAWLAIYGFMTMDRWLLGHW), and 381 to 401 (YMKITYGWSLMLVVVFCVLYF).

It belongs to the glycosyltransferase 87 family.

It localises to the cell membrane. The enzyme catalyses Adds an alpha-D-arabinofuranosyl group from trans,octacis-decaprenylphospho-beta-D-arabinofuranose at the 3-O-position of an alpha-(1-&gt;5)-arabinofuranan chain attached to a beta-(1-&gt;5)-galactofuranan chain.. Its pathway is cell wall biogenesis; cell wall polysaccharide biosynthesis. Its function is as follows. Involved in the biosynthesis of the arabinogalactan (AG) region of the mycolylarabinogalactan-peptidoglycan (mAGP) complex, an essential component of the mycobacterial cell wall. Catalyzes the addition of an arabinofuranosyl (Araf) residue from the sugar donor beta-D-arabinofuranosyl-1-monophosphoryldecaprenol (DPA) on the C-3 of an alpha-(1-&gt;5)-linked Araf from the arabinan backbone of AG. The polypeptide is Alpha-(1-&gt;3)-arabinofuranosyltransferase (aftC) (Mycolicibacterium smegmatis (strain ATCC 700084 / mc(2)155) (Mycobacterium smegmatis)).